The chain runs to 40 residues: Omega-conotoxin RsXXVIA (40 aa).

Post-translationally, contains 4 disulfide bonds. As to expression, expressed by the venom duct.

It is found in the secreted. Functionally, omega-conotoxins act at presynaptic membranes, they bind and block voltage-gated calcium channels (Cav). This toxin inhibits rat Cav2.2/CACNA1B calcium channels in a dose-dependent manner (EC(50)=2.8 uM), whose effect is partially reversed after washing. In vivo, when injected into mice, it shows both an analgesic effect in acute thermal pain at 30 and 45 minutes post-injection and an anti-nociceptive effect in a formalin chronic pain test. The sequence is that of Omega-conotoxin RsXXVIA from Conus regularis (Regular cone).